A 442-amino-acid chain; its full sequence is Dol-P-Man:Man(5)GlcNAc(2)-PP-Dol alpha-1,3-mannosyltransferase (442 aa).

Over 1-34 (MAAPSSRPESNPPLYKQALDFALDVANGRHALSK) the chain is Lumenal. Residues 35–55 (LIPPALFLVDALLCGLIIWKV) traverse the membrane as a helical segment. The Cytoplasmic portion of the chain corresponds to 56–84 (PYTEIDWAAYMEQVSQILSGERDYTKVRG). Residues 85–105 (GTGPLVYPAAHVYIYTGLYHL) form a helical membrane-spanning segment. Topologically, residues 106 to 111 (TDEGRN) are lumenal. A helical membrane pass occupies residues 112–132 (ILLAQQLFAGLYMVTLAVVMG). The Cytoplasmic portion of the chain corresponds to 133–155 (CYWQAKAPPYLFPLLTLSKRLHS). Residues 156–176 (IFVLRCFNDCFAVLFLWLAIF) traverse the membrane as a helical segment. Topologically, residues 177–198 (FFQRRNWQAGALLYTLGLGVKM) are lumenal. Residues 199–219 (TLLLSLPAVGIVLFLGSGSFV) traverse the membrane as a helical segment. A topological domain (cytoplasmic) is located at residue Thr220. Residues 221–241 (TLQLVATMGLVQILIGVPFLA) form a helical membrane-spanning segment. Residues 242 to 272 (HYPTEYLSRAFELSRQFFFKWTVNWRFVGEE) are Lumenal-facing. Residues 273–293 (IFLSKGFALTLLALHVLVLGI) form a helical membrane-spanning segment. Over 294–333 (FITTRWIKPARKSLVQLISPVLLAGKPPLTVPEHRAAARD) the chain is Cytoplasmic. A helical membrane pass occupies residues 334 to 354 (VTPRYIMTTILSANAVGLLFA). The Lumenal portion of the chain corresponds to 355-376 (RSLHYQFYAYVAWSTPFLLWRA). Residues 377–397 (GLHPVLVYLLWAVHEWAWNVF) traverse the membrane as a helical segment. Topologically, residues 398–401 (PSTP) are cytoplasmic. Residues 402-422 (ASSAVVVGVLGVTVAGVWFGA) form a helical membrane-spanning segment. The Lumenal portion of the chain corresponds to 423–442 (REEWEPGMKSSSKKEEAAMR).

Belongs to the glycosyltransferase ALG3 family.

The protein localises to the endoplasmic reticulum membrane. It catalyses the reaction an alpha-D-Man-(1-&gt;2)-alpha-D-Man-(1-&gt;2)-alpha-D-Man-(1-&gt;3)-[alpha-D-Man-(1-&gt;6)]-beta-D-Man-(1-&gt;4)-beta-D-GlcNAc-(1-&gt;4)-alpha-D-GlcNAc-diphospho-di-trans,poly-cis-dolichol + a di-trans,poly-cis-dolichyl beta-D-mannosyl phosphate = an alpha-D-Man-(1-&gt;2)-alpha-D-Man-(1-&gt;2)-alpha-D-Man-(1-&gt;3)-[alpha-D-Man-(1-&gt;3)-alpha-D-Man-(1-&gt;6)]-beta-D-Man-(1-&gt;4)-beta-D-GlcNAc-(1-&gt;4)-alpha-D-GlcNAc-diphospho-di-trans,poly-cis-dolichol + a di-trans,poly-cis-dolichyl phosphate + H(+). It participates in protein modification; protein glycosylation. Dol-P-Man:Man(5)GlcNAc(2)-PP-Dol alpha-1,3-mannosyltransferase that operates in the biosynthetic pathway of dolichol-linked oligosaccharides, the glycan precursors employed in protein asparagine (N)-glycosylation. The assembly of dolichol-linked oligosaccharides begins on the cytosolic side of the endoplasmic reticulum membrane and finishes in its lumen. The sequential addition of sugars to dolichol pyrophosphate produces dolichol-linked oligosaccharides containing fourteen sugars, including two GlcNAcs, nine mannoses and three glucoses. Once assembled, the oligosaccharide is transferred from the lipid to nascent proteins by oligosaccharyltransferases. In the lumen of the endoplasmic reticulum, adds the first dolichyl beta-D-mannosyl phosphate derived mannose in an alpha-1,3 linkage to Man(5)GlcNAc(2)-PP-dolichol to produce Man(6)GlcNAc(2)-PP-dolichol. This is Dol-P-Man:Man(5)GlcNAc(2)-PP-Dol alpha-1,3-mannosyltransferase (alg-3) from Neurospora crassa (strain ATCC 24698 / 74-OR23-1A / CBS 708.71 / DSM 1257 / FGSC 987).